Consider the following 564-residue polypeptide: 2-succinyl-5-enolpyruvyl-6-hydroxy-3-cyclohexene-1-carboxylate synthase (564 aa).

Belongs to the TPP enzyme family. MenD subfamily. Homodimer. Mg(2+) is required as a cofactor. Requires Mn(2+) as cofactor. The cofactor is thiamine diphosphate.

The catalysed reaction is isochorismate + 2-oxoglutarate + H(+) = 5-enolpyruvoyl-6-hydroxy-2-succinyl-cyclohex-3-ene-1-carboxylate + CO2. It participates in quinol/quinone metabolism; 1,4-dihydroxy-2-naphthoate biosynthesis; 1,4-dihydroxy-2-naphthoate from chorismate: step 2/7. It functions in the pathway quinol/quinone metabolism; menaquinone biosynthesis. Catalyzes the thiamine diphosphate-dependent decarboxylation of 2-oxoglutarate and the subsequent addition of the resulting succinic semialdehyde-thiamine pyrophosphate anion to isochorismate to yield 2-succinyl-5-enolpyruvyl-6-hydroxy-3-cyclohexene-1-carboxylate (SEPHCHC). In Vibrio vulnificus (strain CMCP6), this protein is 2-succinyl-5-enolpyruvyl-6-hydroxy-3-cyclohexene-1-carboxylate synthase.